A 362-amino-acid chain; its full sequence is tRNA/tmRNA (uracil-C(5))-methyltransferase (362 aa).

S-adenosyl-L-methionine-binding residues include Gln186, Tyr214, Asn219, Glu235, and Asp295. The active-site Nucleophile is Cys320. Catalysis depends on Glu354, which acts as the Proton acceptor.

Belongs to the class I-like SAM-binding methyltransferase superfamily. RNA M5U methyltransferase family. TrmA subfamily.

The catalysed reaction is uridine(54) in tRNA + S-adenosyl-L-methionine = 5-methyluridine(54) in tRNA + S-adenosyl-L-homocysteine + H(+). The enzyme catalyses uridine(341) in tmRNA + S-adenosyl-L-methionine = 5-methyluridine(341) in tmRNA + S-adenosyl-L-homocysteine + H(+). In terms of biological role, dual-specificity methyltransferase that catalyzes the formation of 5-methyluridine at position 54 (m5U54) in all tRNAs, and that of position 341 (m5U341) in tmRNA (transfer-mRNA). This chain is tRNA/tmRNA (uracil-C(5))-methyltransferase, found in Dechloromonas aromatica (strain RCB).